We begin with the raw amino-acid sequence, 400 residues long: MTRVVVIGSGFAGLWAALGAARRLDELAVLAGTVDVMVVSNKPFHDIRVRNYEADLSACRIPLGDVLGPAGVAHVTAEVTAIDADGRRVTTSTGASYSYDRLVLASGSHVVKPALPGLAEFGFDVDTYDGAVRLQQHLQGLAGGPLTSAAATVVVVGAGLTGIETACELPGRLHALFARGDGVTPRVVLIDHNPFVGSDMGLSARPVIEQALLDNGVETRTGVSVAAVSPGGVTLSSGERLAAATVVWCAGMRASRLTEQLPVARDRLGRLQVDDYLRVIGVPAMFAAGDVAAARMDDEHLSVMSCQHGRPMGRYAGCNVINDLFDQPLLALRIPWYVTVLDLGSAGAVYTEGWERKVVSQGAPAKTTKQSINTRRIYPPLNGSRADLLAAAAPRVQPRP.

This sequence belongs to the NADH dehydrogenase family. Requires FAD as cofactor.

This Mycobacterium tuberculosis (strain ATCC 25618 / H37Rv) protein is NADH dehydrogenase-like protein Rv1812c.